Here is a 225-residue protein sequence, read N- to C-terminus: Rho GDP-dissociation inhibitor 3 (225 aa).

This sequence belongs to the Rho GDI family. As to expression, detected only in brain, lung, kidney and testis.

It localises to the cytoplasm. In terms of biological role, inhibits GDP/GTP exchange reaction of RhoB. Interacts specifically with the GDP- and GTP-bound forms of post-translationally processed Rhob and Rhog proteins, both of which show a growth-regulated expression in mammalian cells. Stimulates the release of the GDP-bound but not the GTP-bound RhoB protein. Also inhibits the GDP/GTP exchange of RhoB but shows less ability to inhibit the dissociation of prebound GTP. The polypeptide is Rho GDP-dissociation inhibitor 3 (Arhgdig) (Mus musculus (Mouse)).